We begin with the raw amino-acid sequence, 427 residues long: Actin-related protein 3 (427 aa).

The protein belongs to the actin family. ARP3 subfamily. As to quaternary structure, component of the Arp2/3 complex composed of arp2, act2, arc1/p41-ARC, arc2/p34-ARC, arc3/p21-ARC, arc4/p20-ARC and arc5/p16-ARC.

The protein resides in the cytoplasm. It is found in the cytoskeleton. Its subcellular location is the actin patch. Functions as ATP-binding component of the Arp2/3 complex which is involved in regulation of actin polymerization and together with an activating nucleation-promoting factor (NPF) mediates the formation of branched actin networks. Seems to contact the pointed end of the daughter actin filament. May be involved in cytokinesis. The polypeptide is Actin-related protein 3 (act2) (Schizosaccharomyces pombe (strain 972 / ATCC 24843) (Fission yeast)).